We begin with the raw amino-acid sequence, 245 residues long: 1-(5-phosphoribosyl)-5-[(5-phosphoribosylamino)methylideneamino] imidazole-4-carboxamide isomerase (245 aa).

The Proton acceptor role is filled by D10. The active-site Proton donor is D129.

This sequence belongs to the HisA/HisF family.

The protein resides in the cytoplasm. It catalyses the reaction 1-(5-phospho-beta-D-ribosyl)-5-[(5-phospho-beta-D-ribosylamino)methylideneamino]imidazole-4-carboxamide = 5-[(5-phospho-1-deoxy-D-ribulos-1-ylimino)methylamino]-1-(5-phospho-beta-D-ribosyl)imidazole-4-carboxamide. The protein operates within amino-acid biosynthesis; L-histidine biosynthesis; L-histidine from 5-phospho-alpha-D-ribose 1-diphosphate: step 4/9. This is 1-(5-phosphoribosyl)-5-[(5-phosphoribosylamino)methylideneamino] imidazole-4-carboxamide isomerase from Parafrankia sp. (strain EAN1pec).